We begin with the raw amino-acid sequence, 479 residues long: D-aminoacyl-tRNA deacylase (479 aa).

The protein belongs to the DtdA deacylase family. Monomer. Requires Zn(2+) as cofactor.

It catalyses the reaction a D-aminoacyl-tRNA + H2O = a tRNA + a D-alpha-amino acid + H(+). The catalysed reaction is glycyl-tRNA(Ala) + H2O = tRNA(Ala) + glycine + H(+). Functionally, D-aminoacyl-tRNA deacylase with broad substrate specificity. By recycling D-aminoacyl-tRNA to D-amino acids and free tRNA molecules, this enzyme counteracts the toxicity associated with the formation of D-aminoacyl-tRNA entities in vivo. The protein is D-aminoacyl-tRNA deacylase of Methanococcoides burtonii (strain DSM 6242 / NBRC 107633 / OCM 468 / ACE-M).